Consider the following 511-residue polypeptide: Alpha-amylase 2B (511 aa).

Positions 1-15 are cleaved as a signal peptide; that stretch reads MKFFLLLFTIGFCWA. Residue Gln-16 is modified to Pyrrolidone carboxylic acid. Disulfide bonds link Cys-43/Cys-101, Cys-85/Cys-130, and Cys-156/Cys-175. Asn-115, Arg-173, and Asp-182 together coordinate Ca(2+). Arg-210 lines the chloride pocket. The active-site Nucleophile is Asp-212. Residue His-216 coordinates Ca(2+). The active-site Proton donor is Glu-248. Asn-313 and Arg-352 together coordinate chloride. Cystine bridges form between Cys-393-Cys-399 and Cys-465-Cys-477.

The protein belongs to the glycosyl hydrolase 13 family. In terms of assembly, monomer. Ca(2+) serves as cofactor. Requires chloride as cofactor.

It localises to the secreted. It carries out the reaction Endohydrolysis of (1-&gt;4)-alpha-D-glucosidic linkages in polysaccharides containing three or more (1-&gt;4)-alpha-linked D-glucose units.. This Homo sapiens (Human) protein is Alpha-amylase 2B (AMY2B).